The chain runs to 266 residues: Thymidylate synthase (266 aa).

Arg24 is a dUMP binding site. (6R)-5,10-methylene-5,6,7,8-tetrahydrofolate is bound at residue His54. 129 to 130 (RR) is a binding site for dUMP. Cys149 functions as the Nucleophile in the catalytic mechanism. DUMP-binding positions include 169–172 (RSAD), Asn180, and 210–212 (HIY). Asp172 serves as a coordination point for (6R)-5,10-methylene-5,6,7,8-tetrahydrofolate. Ala265 is a (6R)-5,10-methylene-5,6,7,8-tetrahydrofolate binding site.

This sequence belongs to the thymidylate synthase family. Bacterial-type ThyA subfamily. As to quaternary structure, homodimer.

It is found in the cytoplasm. It carries out the reaction dUMP + (6R)-5,10-methylene-5,6,7,8-tetrahydrofolate = 7,8-dihydrofolate + dTMP. It participates in pyrimidine metabolism; dTTP biosynthesis. Functionally, catalyzes the reductive methylation of 2'-deoxyuridine-5'-monophosphate (dUMP) to 2'-deoxythymidine-5'-monophosphate (dTMP) while utilizing 5,10-methylenetetrahydrofolate (mTHF) as the methyl donor and reductant in the reaction, yielding dihydrofolate (DHF) as a by-product. This enzymatic reaction provides an intracellular de novo source of dTMP, an essential precursor for DNA biosynthesis. The sequence is that of Thymidylate synthase from Mycobacterium avium (strain 104).